A 251-amino-acid polypeptide reads, in one-letter code: Probable transcriptional regulatory protein AAur_2300 (251 aa).

This sequence belongs to the TACO1 family.

Its subcellular location is the cytoplasm. In Paenarthrobacter aurescens (strain TC1), this protein is Probable transcriptional regulatory protein AAur_2300.